Here is a 135-residue protein sequence, read N- to C-terminus: Cytochrome c oxidase subunit 2 (135 aa).

Cu cation is bound by residues histidine 81, cysteine 116, cysteine 120, and histidine 124.

Belongs to the cytochrome c oxidase subunit 2 family.

It localises to the cell membrane. It catalyses the reaction 4 Fe(II)-[cytochrome c] + O2 + 8 H(+)(in) = 4 Fe(III)-[cytochrome c] + 2 H2O + 4 H(+)(out). Subunits I and II form the functional core of the enzyme complex. Electrons originating in cytochrome c are transferred via heme a and Cu(A) to the binuclear center formed by heme a3 and Cu(B). The sequence is that of Cytochrome c oxidase subunit 2 (cbaB) from Thermus thermophilus.